We begin with the raw amino-acid sequence, 388 residues long: Chorismate synthase (388 aa).

Residues arginine 39 and arginine 45 each coordinate NADP(+). Residues 95–118 (EKNEKSRRVSRPRPGHADLVGGMK) are disordered. Residues 130-132 (RSS), 251-252 (NA), glycine 296, 311-315 (KPIPT), and arginine 337 contribute to the FMN site.

This sequence belongs to the chorismate synthase family. As to quaternary structure, homotetramer. Requires FMNH2 as cofactor.

The catalysed reaction is 5-O-(1-carboxyvinyl)-3-phosphoshikimate = chorismate + phosphate. The protein operates within metabolic intermediate biosynthesis; chorismate biosynthesis; chorismate from D-erythrose 4-phosphate and phosphoenolpyruvate: step 7/7. Its function is as follows. Catalyzes the anti-1,4-elimination of the C-3 phosphate and the C-6 proR hydrogen from 5-enolpyruvylshikimate-3-phosphate (EPSP) to yield chorismate, which is the branch point compound that serves as the starting substrate for the three terminal pathways of aromatic amino acid biosynthesis. This reaction introduces a second double bond into the aromatic ring system. In Listeria monocytogenes serovar 1/2a (strain ATCC BAA-679 / EGD-e), this protein is Chorismate synthase.